A 236-amino-acid chain; its full sequence is Endonuclease NucS (236 aa).

This sequence belongs to the NucS endonuclease family.

Its subcellular location is the cytoplasm. Its function is as follows. Cleaves both 3' and 5' ssDNA extremities of branched DNA structures. This Saccharolobus solfataricus (strain ATCC 35092 / DSM 1617 / JCM 11322 / P2) (Sulfolobus solfataricus) protein is Endonuclease NucS.